The following is a 393-amino-acid chain: NAD(P)H-quinone oxidoreductase subunit H, chloroplastic (393 aa).

It belongs to the complex I 49 kDa subunit family. NDH is composed of at least 16 different subunits, 5 of which are encoded in the nucleus.

It localises to the plastid. The protein resides in the chloroplast thylakoid membrane. The enzyme catalyses a plastoquinone + NADH + (n+1) H(+)(in) = a plastoquinol + NAD(+) + n H(+)(out). It catalyses the reaction a plastoquinone + NADPH + (n+1) H(+)(in) = a plastoquinol + NADP(+) + n H(+)(out). NDH shuttles electrons from NAD(P)H:plastoquinone, via FMN and iron-sulfur (Fe-S) centers, to quinones in the photosynthetic chain and possibly in a chloroplast respiratory chain. The immediate electron acceptor for the enzyme in this species is believed to be plastoquinone. Couples the redox reaction to proton translocation, and thus conserves the redox energy in a proton gradient. This Lepidium virginicum (Virginia pepperweed) protein is NAD(P)H-quinone oxidoreductase subunit H, chloroplastic.